The primary structure comprises 142 residues: ATP synthase epsilon chain (142 aa).

The protein belongs to the ATPase epsilon chain family. As to quaternary structure, F-type ATPases have 2 components, CF(1) - the catalytic core - and CF(0) - the membrane proton channel. CF(1) has five subunits: alpha(3), beta(3), gamma(1), delta(1), epsilon(1). CF(0) has three main subunits: a, b and c.

It localises to the cell inner membrane. In terms of biological role, produces ATP from ADP in the presence of a proton gradient across the membrane. The protein is ATP synthase epsilon chain of Shewanella frigidimarina (strain NCIMB 400).